We begin with the raw amino-acid sequence, 623 residues long: ATPase expression protein 3 (623 aa).

PPR repeat units lie at residues 217-251 (SVQC…GCKP), 252-292 (NTTT…NGIF), 362-396 (NLKF…QLKF), 405-439 (NSET…LVGP), and 445-479 (NVNT…SERY).

Its subcellular location is the mitochondrion inner membrane. Its function is as follows. Required for respiration. The protein is ATPase expression protein 3 (AEP3) of Candida glabrata (strain ATCC 2001 / BCRC 20586 / JCM 3761 / NBRC 0622 / NRRL Y-65 / CBS 138) (Yeast).